A 267-amino-acid polypeptide reads, in one-letter code: Indole-3-glycerol phosphate synthase (267 aa).

Belongs to the TrpC family.

The enzyme catalyses 1-(2-carboxyphenylamino)-1-deoxy-D-ribulose 5-phosphate + H(+) = (1S,2R)-1-C-(indol-3-yl)glycerol 3-phosphate + CO2 + H2O. Its pathway is amino-acid biosynthesis; L-tryptophan biosynthesis; L-tryptophan from chorismate: step 4/5. This Polynucleobacter asymbioticus (strain DSM 18221 / CIP 109841 / QLW-P1DMWA-1) (Polynucleobacter necessarius subsp. asymbioticus) protein is Indole-3-glycerol phosphate synthase.